The primary structure comprises 529 residues: Bifunctional purine biosynthesis protein PurH (529 aa).

One can recognise an MGS-like domain in the interval 1-148 (MQQRRPVRRA…KNHKDVAIVV (148 aa)).

Belongs to the PurH family.

The catalysed reaction is (6R)-10-formyltetrahydrofolate + 5-amino-1-(5-phospho-beta-D-ribosyl)imidazole-4-carboxamide = 5-formamido-1-(5-phospho-D-ribosyl)imidazole-4-carboxamide + (6S)-5,6,7,8-tetrahydrofolate. The enzyme catalyses IMP + H2O = 5-formamido-1-(5-phospho-D-ribosyl)imidazole-4-carboxamide. The protein operates within purine metabolism; IMP biosynthesis via de novo pathway; 5-formamido-1-(5-phospho-D-ribosyl)imidazole-4-carboxamide from 5-amino-1-(5-phospho-D-ribosyl)imidazole-4-carboxamide (10-formyl THF route): step 1/1. It functions in the pathway purine metabolism; IMP biosynthesis via de novo pathway; IMP from 5-formamido-1-(5-phospho-D-ribosyl)imidazole-4-carboxamide: step 1/1. The chain is Bifunctional purine biosynthesis protein PurH from Salmonella schwarzengrund (strain CVM19633).